The sequence spans 70 residues: Small ribosomal subunit protein bS21 (70 aa).

Belongs to the bacterial ribosomal protein bS21 family.

This is Small ribosomal subunit protein bS21 from Campylobacter jejuni subsp. jejuni serotype O:23/36 (strain 81-176).